The sequence spans 120 residues: Large ribosomal subunit protein uL18 (120 aa).

It belongs to the universal ribosomal protein uL18 family. In terms of assembly, part of the 50S ribosomal subunit; part of the 5S rRNA/L5/L18/L25 subcomplex. Contacts the 5S and 23S rRNAs.

This is one of the proteins that bind and probably mediate the attachment of the 5S RNA into the large ribosomal subunit, where it forms part of the central protuberance. The sequence is that of Large ribosomal subunit protein uL18 from Rhizobium rhizogenes (strain K84 / ATCC BAA-868) (Agrobacterium radiobacter).